We begin with the raw amino-acid sequence, 341 residues long: Ribulose-5-phosphate reductase 1 (341 aa).

4 residues coordinate Zn(2+): C38, H64, E65, and E144.

This sequence belongs to the zinc-containing alcohol dehydrogenase family. Heterodimer together with TarI. Can also form a dimer of heterodimers. Zn(2+) is required as a cofactor.

It carries out the reaction D-ribitol 5-phosphate + NADP(+) = D-ribulose 5-phosphate + NADPH + H(+). It functions in the pathway cell wall biogenesis; poly(ribitol phosphate) teichoic acid biosynthesis. Functionally, catalyzes the NADPH dependent reduction of D-ribulose 5-phosphate to D-ribitol 5-phosphate. The protein is Ribulose-5-phosphate reductase 1 of Staphylococcus aureus (strain NCTC 8325 / PS 47).